Consider the following 89-residue polypeptide: Transcriptional regulator WhiB2 (89 aa).

The segment covering 1–15 (MVPEAPAPFEEPLPP) has biased composition (pro residues). Residues 1–24 (MVPEAPAPFEEPLPPEATDQWQDR) are disordered. The 4Fe-4S Wbl-type domain occupies 26–83 (LCAQTDPEAFFPEKGGSTREAKKICMGCEVRHECLEYALAHDERFGIWGGLSERERRR). Residue cysteine 27 participates in [4Fe-4S] cluster binding. Phosphoserine is present on serine 42. Residues cysteine 50, cysteine 53, and cysteine 59 each coordinate [4Fe-4S] cluster.

The protein belongs to the WhiB family. [4Fe-4S] cluster serves as cofactor. Post-translationally, may be phosphorylated, possibly on Ser-42. In terms of processing, the cluster is degraded quickly in the presence of air. Upon cluster removal intramolecular disulfide bonds are formed. The Fe-S cluster can be nitrosylated by nitric oxide (NO).

It localises to the cytoplasm. In terms of biological role, acts as a transcriptional regulator. Probably redox-responsive. The apo- but not holo-form probably binds DNA. Functionally, the apo-form functions as a chaperone, preventing aggregation or helping in correct refolding of a number of substrates; this activity does not require ATP or the ability to bind a Fe-S cluster. Chaperone activity is insensitive to the redox state of its cysteine residues. The apo-form has no protein disulfide reductase activity. The apo-form binds to its own promoter. The sequence is that of Transcriptional regulator WhiB2 (whiB2) from Mycobacterium tuberculosis (strain ATCC 25618 / H37Rv).